The following is a 96-amino-acid chain: Small ribosomal subunit protein bS20 (96 aa).

The tract at residues 1-27 is disordered; it reads MAKQEVAAKKVKRPTALKRDLQNKKKR.

Belongs to the bacterial ribosomal protein bS20 family.

Functionally, binds directly to 16S ribosomal RNA. The protein is Small ribosomal subunit protein bS20 of Protochlamydia amoebophila (strain UWE25).